The following is a 233-amino-acid chain: Biosynthetic peptidoglycan transglycosylase (233 aa).

Residues 8-28 traverse the membrane as a helical segment; it reads LIALPVGIFIFFNAYVYGNII.

It belongs to the glycosyltransferase 51 family.

It is found in the cell inner membrane. The enzyme catalyses [GlcNAc-(1-&gt;4)-Mur2Ac(oyl-L-Ala-gamma-D-Glu-L-Lys-D-Ala-D-Ala)](n)-di-trans,octa-cis-undecaprenyl diphosphate + beta-D-GlcNAc-(1-&gt;4)-Mur2Ac(oyl-L-Ala-gamma-D-Glu-L-Lys-D-Ala-D-Ala)-di-trans,octa-cis-undecaprenyl diphosphate = [GlcNAc-(1-&gt;4)-Mur2Ac(oyl-L-Ala-gamma-D-Glu-L-Lys-D-Ala-D-Ala)](n+1)-di-trans,octa-cis-undecaprenyl diphosphate + di-trans,octa-cis-undecaprenyl diphosphate + H(+). Its pathway is cell wall biogenesis; peptidoglycan biosynthesis. Functionally, peptidoglycan polymerase that catalyzes glycan chain elongation from lipid-linked precursors. The sequence is that of Biosynthetic peptidoglycan transglycosylase from Neisseria gonorrhoeae (strain NCCP11945).